The chain runs to 185 residues: Photosystem I assembly protein Ycf4 (185 aa).

2 helical membrane-spanning segments follow: residues 20-40 (GNFF…AVGA) and 57-77 (ILFF…LFIS).

The protein belongs to the Ycf4 family.

The protein resides in the plastid. It is found in the chloroplast thylakoid membrane. Its function is as follows. Seems to be required for the assembly of the photosystem I complex. This chain is Photosystem I assembly protein Ycf4, found in Oryza nivara (Indian wild rice).